The primary structure comprises 158 residues: Urease accessory protein UreE (158 aa).

A disordered region spans residues 133–158; that stretch reads PEGGAYQAHSHDGHSHHQGHTHDHHD. The segment covering 141–158 has biased composition (basic and acidic residues); it reads HSHDGHSHHQGHTHDHHD.

Belongs to the UreE family.

Its subcellular location is the cytoplasm. Involved in urease metallocenter assembly. Binds nickel. Probably functions as a nickel donor during metallocenter assembly. This Chelativorans sp. (strain BNC1) protein is Urease accessory protein UreE.